We begin with the raw amino-acid sequence, 240 residues long: Fatty acid metabolism regulator protein (240 aa).

Residues 6 to 74 (KGPASFAEKY…HGKPTRVNNF (69 aa)) form the HTH gntR-type domain. Residues 34–53 (ERELSELIGVTRTTLREVLQ) constitute a DNA-binding region (H-T-H motif).

As to quaternary structure, homodimer.

It is found in the cytoplasm. Its function is as follows. Multifunctional regulator of fatty acid metabolism. This Shewanella oneidensis (strain ATCC 700550 / JCM 31522 / CIP 106686 / LMG 19005 / NCIMB 14063 / MR-1) protein is Fatty acid metabolism regulator protein.